A 334-amino-acid polypeptide reads, in one-letter code: Glucan endo-1,3-beta-glucosidase GII (334 aa).

The first 28 residues, 1–28, serve as a signal peptide directing secretion; sequence MARKDVASMFAAALFIGAFAAVPTSVQS. The active-site Proton donor is Glu-122. Glu-259 functions as the Nucleophile in the catalytic mechanism.

It belongs to the glycosyl hydrolase 17 family.

The catalysed reaction is Hydrolysis of (1-&gt;3)-beta-D-glucosidic linkages in (1-&gt;3)-beta-D-glucans.. Its function is as follows. May provide a degree of protection against microbial invasion of germinated barley grain through its ability to degrade fungal cell wall polysaccharides. Hydrolyzes laminarin in vitro. This is Glucan endo-1,3-beta-glucosidase GII from Hordeum vulgare (Barley).